Reading from the N-terminus, the 366-residue chain is Histidinol-phosphate aminotransferase (366 aa).

An N6-(pyridoxal phosphate)lysine modification is found at lysine 226.

Belongs to the class-II pyridoxal-phosphate-dependent aminotransferase family. Histidinol-phosphate aminotransferase subfamily. Requires pyridoxal 5'-phosphate as cofactor.

It catalyses the reaction L-histidinol phosphate + 2-oxoglutarate = 3-(imidazol-4-yl)-2-oxopropyl phosphate + L-glutamate. It functions in the pathway amino-acid biosynthesis; L-histidine biosynthesis; L-histidine from 5-phospho-alpha-D-ribose 1-diphosphate: step 7/9. This is Histidinol-phosphate aminotransferase from Methanosarcina barkeri (strain Fusaro / DSM 804).